A 223-amino-acid polypeptide reads, in one-letter code: MOB-like protein phocein (223 aa).

Residues Cys92, Cys97, Cys110, His113, Cys119, His127, His169, and His174 each coordinate Zn(2+).

This sequence belongs to the MOB1/phocein family. In terms of assembly, part of the core of STRIPAK complexes composed of PP2A catalytic and scaffolding subunits, the striatins (PP2A regulatory subunits), the striatin-associated proteins MOB4, STRIP1 and STRIP2, PDCD10 and members of the STE20 kinases, such as STK24 and STK26.

It localises to the cytoplasm. The protein localises to the membrane. It is found in the golgi apparatus. Its subcellular location is the golgi stack membrane. Functionally, part of the striatin-interacting phosphatase and kinase (STRIPAK) complexes. STRIPAK complexes have critical roles in protein (de)phosphorylation and are regulators of multiple signaling pathways including Hippo, MAPK, nuclear receptor and cytoskeleton remodeling. Different types of STRIPAK complexes are involved in a variety of biological processes such as cell growth, differentiation, apoptosis, metabolism and immune regulation. This is MOB-like protein phocein (MOB4) from Gallus gallus (Chicken).